The chain runs to 80 residues: Large ribosomal subunit protein bL31B (80 aa).

This sequence belongs to the bacterial ribosomal protein bL31 family. Type B subfamily. Part of the 50S ribosomal subunit.

The protein is Large ribosomal subunit protein bL31B of Xanthomonas axonopodis pv. citri (strain 306).